The primary structure comprises 161 residues: DNA-directed RNA polymerase 19 kDa subunit (161 aa).

Residues 1–32 (MADTDDIIDYESDDLTEYEDDEEDGESLETSD) show a composition bias toward acidic residues. Residues 1–35 (MADTDDIIDYESDDLTEYEDDEEDGESLETSDIDP) form a disordered region.

The protein belongs to the poxviridae DNA-directed RNA polymerase 19 kDa subunit family. As to quaternary structure, the DNA-dependent RNA polymerase used for intermediate and late genes expression consists of eight subunits Rpo30/OPG66, Rpo7/OPG90, Rpo22/OPG103, Rpo147/OPG105, Rpo18/OPG119, Rpo19/OPG131, Rpo132/OPG151 and Rpo35/OPG156. The same holoenzyme, with the addition of the transcription-specificity factor OPG109, is used for early gene expression.

Its subcellular location is the virion. It carries out the reaction RNA(n) + a ribonucleoside 5'-triphosphate = RNA(n+1) + diphosphate. Functionally, part of the DNA-dependent RNA polymerase which catalyzes the transcription of viral DNA into RNA using the four ribonucleoside triphosphates as substrates. Responsible for the transcription of early, intermediate and late genes. DNA-dependent RNA polymerase associates with the early transcription factor (ETF), itself composed of OPG118 and OPG133, thereby allowing the early genes transcription. Late transcription, and probably also intermediate transcription, require newly synthesized RNA polymerase. The protein is DNA-directed RNA polymerase 19 kDa subunit (OPG131) of Monkeypox virus.